The sequence spans 249 residues: 23S rRNA (guanosine-2'-O-)-methyltransferase RlmB (249 aa).

Residues Gly200, Ile220, and Leu229 each coordinate S-adenosyl-L-methionine.

This sequence belongs to the class IV-like SAM-binding methyltransferase superfamily. RNA methyltransferase TrmH family. RlmB subfamily.

It is found in the cytoplasm. It carries out the reaction guanosine(2251) in 23S rRNA + S-adenosyl-L-methionine = 2'-O-methylguanosine(2251) in 23S rRNA + S-adenosyl-L-homocysteine + H(+). Specifically methylates the ribose of guanosine 2251 in 23S rRNA. The protein is 23S rRNA (guanosine-2'-O-)-methyltransferase RlmB of Xylella fastidiosa (strain Temecula1 / ATCC 700964).